A 781-amino-acid chain; its full sequence is Dual specificity protein kinase zakA (781 aa).

Protein kinase domains lie at 9–317 (WEEI…HKLI) and 379–654 (DKDD…EIGL). ATP-binding positions include 15–23 (IGEGQYGRV) and lysine 44. Aspartate 132 serves as the catalytic Proton acceptor. The tract at residues 168–209 (ETTNNNNNPNNNNNNNNNNNNNNNNNNNNNNNNNNINNINNN) is disordered. The span at 171–209 (NNNNNPNNNNNNNNNNNNNNNNNNNNNNNNNNINNINNN) shows a compositional bias: low complexity. ATP is bound by residues 385–393 (GGAGNFGDV) and lysine 406. The active-site Proton acceptor is the aspartate 507.

It in the N-terminal section; belongs to the protein kinase superfamily. Ser/Thr protein kinase family. This sequence in the C-terminal section; belongs to the protein kinase superfamily. TKL Tyr protein kinase family. In terms of processing, N-terminal serine/threonine domain is capable of autophosphorylation, in vitro, but to a lower extent than the tyrosine kinase domain. May function as a negative regulator of the tyrosine kinase domain. Post-translationally, C-terminal tyrosine kinase domain is capable of autophosphorylation, in vitro. As to expression, zakA and zak2 are coexpressed in prestalk cell population, zakA is enriched in pstB populations and zak1 in pstA populations. ZakA and zak2 are coexpressed in prespore cells, zakA expression levels are 10 fold higher than zak2.

It carries out the reaction L-seryl-[protein] + ATP = O-phospho-L-seryl-[protein] + ADP + H(+). The catalysed reaction is L-threonyl-[protein] + ATP = O-phospho-L-threonyl-[protein] + ADP + H(+). It catalyses the reaction L-tyrosyl-[protein] + ATP = O-phospho-L-tyrosyl-[protein] + ADP + H(+). Functionally, positive regulator of gsk3/gskA activity required for cell pattern formation and a downstream effector of carC. The kinases, gsk3/gskA, zakA and zak2, form part of a signaling pathway that responds to extracellular cyclic AMP. The pathway has a role in transcriptional regulation; required to direct prespore/spore fates during development. ZakA negatively regulates prestalk differentiation by regulating expression of ecmB. Phosphorylates Y-214 of gsk3/gskA, in vitro. This is Dual specificity protein kinase zakA (zakA) from Dictyostelium discoideum (Social amoeba).